The following is a 378-amino-acid chain: Ecotin-like protein 3 (378 aa).

Disordered regions lie at residues His191–Pro216 and Pro238–Pro378. A compositionally biased stretch (polar residues) spans Asn274–Glu287. Residues Arg337–Met348 are compositionally biased toward basic and acidic residues. Residues Lys362–Pro378 show a composition bias toward low complexity.

It belongs to the protease inhibitor I11 (ecotin) family.

This chain is Ecotin-like protein 3, found in Leishmania infantum.